The primary structure comprises 247 residues: Small ribosomal subunit protein uS2 (247 aa).

Belongs to the universal ribosomal protein uS2 family.

The sequence is that of Small ribosomal subunit protein uS2 from Pseudomonas syringae pv. tomato (strain ATCC BAA-871 / DC3000).